Here is a 358-residue protein sequence, read N- to C-terminus: Diels-Alderase phmD (358 aa).

It belongs to the Diels-Alderase family.

The protein operates within mycotoxin biosynthesis. Functionally, diels-Alderase; part of the gene cluster that mediates the biosynthesis of the mycotoxins phomacins, leucine-derived cytochalasans with potent actin polymerization-inhibitory activities and monocot-specific antigerminative activities. The first step in the pathway is catalyzed by the hybrid PKS-NRPS phmA, assisted by the enoyl reductase phmE, that are responsible for fusion of the leucine precursor and the polyketide backbone to produce a 2-pyrrolidone intermediate. The polyketide synthase module (PKS) of phmA is responsible for the synthesis of the polyketide backbone and the downstream nonribosomal peptide synthetase (NRPS) amidates the carboxyl end of the polyketide with the leucine precursor. Because phmA lacks a designated enoylreductase (ER) domain, the required activity is provided the enoyl reductase phmE. Reduction by the hydrolyase phmG, followed by dehydration and intra-molecular Diels-Alder cyclization by the Diels-Alderase phmD then yield the required isoindolone-fused macrocycle. A number of oxidative steps catalyzed by the tailoring cytochrome P450 monooxygenase phmB, the FAD-linked oxidoreductase phmC and the short-chain dehydrogenase/reductase phmF, are further required to afford the final products, phomacin D and phomacin E. In Phaeosphaeria nodorum (strain SN15 / ATCC MYA-4574 / FGSC 10173) (Glume blotch fungus), this protein is Diels-Alderase phmD.